A 264-amino-acid polypeptide reads, in one-letter code: MSNKLTEICDTKRDHVARRKAETSFAELTARAKAADAPRGFRAALDRKVAEGGYGLIAEIKKASPSKGLIRPDFDPPAHARAYQAAGAACLSVLTDMPYFQGHDDYLVQARAACALPALRKDFIVDPWQVTEARALGADAILIIVAALDDGQMAEIEAAAIEHGMDALVEVHDADEFDRALRLRSRLIGVNNRDLRDFTIDFARTYELVGHAPAGCTFVAESGLGSKADLDAMADHGVGCFLVGESLMRQDDLAAATRRLLTGA.

It belongs to the TrpC family.

The enzyme catalyses 1-(2-carboxyphenylamino)-1-deoxy-D-ribulose 5-phosphate + H(+) = (1S,2R)-1-C-(indol-3-yl)glycerol 3-phosphate + CO2 + H2O. The protein operates within amino-acid biosynthesis; L-tryptophan biosynthesis; L-tryptophan from chorismate: step 4/5. This is Indole-3-glycerol phosphate synthase from Rhizorhabdus wittichii (strain DSM 6014 / CCUG 31198 / JCM 15750 / NBRC 105917 / EY 4224 / RW1) (Sphingomonas wittichii).